A 230-amino-acid chain; its full sequence is Lipoprotein-releasing system ATP-binding protein LolD (230 aa).

The region spanning 10–228 (LRAEHLSKVY…QLHMANGRLL (219 aa)) is the ABC transporter domain. 46–53 (GASGSGKS) is a binding site for ATP.

The protein belongs to the ABC transporter superfamily. Lipoprotein translocase (TC 3.A.1.125) family. As to quaternary structure, the complex is composed of two ATP-binding proteins (LolD) and two transmembrane proteins (LolC and LolE).

It is found in the cell inner membrane. Its function is as follows. Part of the ABC transporter complex LolCDE involved in the translocation of mature outer membrane-directed lipoproteins, from the inner membrane to the periplasmic chaperone, LolA. Responsible for the formation of the LolA-lipoprotein complex in an ATP-dependent manner. The sequence is that of Lipoprotein-releasing system ATP-binding protein LolD from Bordetella avium (strain 197N).